The chain runs to 162 residues: CASP-like protein 1C1 (162 aa).

Topologically, residues 1–7 are cytoplasmic; sequence MFSAKAR. The helical transmembrane segment at 8–28 threads the bilayer; it reads WIVAVVLRVAAAGAAAVAAVL. Topologically, residues 29-52 are extracellular; the sequence is MAMSHDEVIVYGMEVQAKFRYTPS. Residues 53–73 traverse the membrane as a helical segment; the sequence is LVFFVAANAAVSACSLVVLLV. The Cytoplasmic portion of the chain corresponds to 74-83; that stretch reads PSSTSKLAAR. The helical transmembrane segment at 84-104 threads the bilayer; sequence LLLMADVVLGMVLAGAFAAAG. Topologically, residues 105–135 are extracellular; that stretch reads AMAELGKNGNSHAGWIAICVQVPLFCDRVRS. The chain crosses the membrane as a helical span at residues 136–156; it reads ALVAGSATIVLYYLMLMYSIY. Over 157–162 the chain is Cytoplasmic; that stretch reads TLPMFP.

Belongs to the Casparian strip membrane proteins (CASP) family. As to quaternary structure, homodimer and heterodimers.

Its subcellular location is the cell membrane. This is CASP-like protein 1C1 from Oryza sativa subsp. japonica (Rice).